The following is a 246-amino-acid chain: Transcription factor A, mitochondrial (246 aa).

The transit peptide at 1 to 42 (MAFLRSMWGVLSALGRSGAAVCIGCGSRLRSPFSFVYLPKCF) directs the protein to the mitochondrion. The segment at residues 50–118 (PKKPVSSYLR…VYKEKISRFK (69 aa)) is a DNA-binding region (HMG box 1). A phosphoserine; by PKA mark is found at S55, S56, and S61. T122 carries the phosphothreonine modification. Residues 155 to 219 (PKRPRSAYNV…RYHNEMKSWE (65 aa)) constitute a DNA-binding region (HMG box 2). S160 is modified (phosphoserine; by PKA). Phosphoserine occurs at positions 193 and 195.

As to quaternary structure, monomer; binds DNA as a monomer. Homodimer. Component of the mitochondrial transcription initiation complex, composed at least of TFB2M, TFAM and POLRMT. In this complex TFAM recruits POLRMT to the promoter whereas TFB2M induces structural changes in POLRMT to enable promoter opening and trapping of the DNA non-template strand. Upon metabolic stress, forms a complex composed of FOXO3, SIRT3, TFAM and POLRMT. Interacts with TFB1M and TFB2M. Interacts with CLPX; this enhances DNA-binding. In terms of processing, phosphorylation by PKA within the HMG box 1 impairs DNA binding and promotes degradation by the AAA+ Lon protease.

It localises to the mitochondrion. It is found in the mitochondrion matrix. The protein localises to the mitochondrion nucleoid. In terms of biological role, binds to the mitochondrial light strand promoter and functions in mitochondrial transcription regulation. Component of the mitochondrial transcription initiation complex, composed at least of TFB2M, TFAM and POLRMT that is required for basal transcription of mitochondrial DNA. In this complex, TFAM recruits POLRMT to a specific promoter whereas TFB2M induces structural changes in POLRMT to enable promoter opening and trapping of the DNA non-template strand. Required for accurate and efficient promoter recognition by the mitochondrial RNA polymerase. Promotes transcription initiation from the HSP1 and the light strand promoter by binding immediately upstream of transcriptional start sites. Is able to unwind DNA. Bends the mitochondrial light strand promoter DNA into a U-turn shape via its HMG boxes. Required for maintenance of normal levels of mitochondrial DNA. May play a role in organizing and compacting mitochondrial DNA. The sequence is that of Transcription factor A, mitochondrial from Trachypithecus cristatus (Silvered leaf-monkey).